Consider the following 561-residue polypeptide: DNA ligase B (561 aa).

Lys128 functions as the N6-AMP-lysine intermediate in the catalytic mechanism.

It belongs to the NAD-dependent DNA ligase family. LigB subfamily.

The catalysed reaction is NAD(+) + (deoxyribonucleotide)n-3'-hydroxyl + 5'-phospho-(deoxyribonucleotide)m = (deoxyribonucleotide)n+m + AMP + beta-nicotinamide D-nucleotide.. Its function is as follows. Catalyzes the formation of phosphodiester linkages between 5'-phosphoryl and 3'-hydroxyl groups in double-stranded DNA using NAD as a coenzyme and as the energy source for the reaction. This is DNA ligase B from Pseudomonas syringae pv. tomato (strain ATCC BAA-871 / DC3000).